The primary structure comprises 606 residues: Elongation factor 4 (606 aa).

Positions 11 to 193 constitute a tr-type G domain; it reads PHIRNFSIIA…RLVRDVPPPK (183 aa). Residues 23 to 28 and 140 to 143 each bind GTP; these read DHGKST and NKMD.

This sequence belongs to the TRAFAC class translation factor GTPase superfamily. Classic translation factor GTPase family. LepA subfamily.

It is found in the cell inner membrane. The enzyme catalyses GTP + H2O = GDP + phosphate + H(+). In terms of biological role, required for accurate and efficient protein synthesis under certain stress conditions. May act as a fidelity factor of the translation reaction, by catalyzing a one-codon backward translocation of tRNAs on improperly translocated ribosomes. Back-translocation proceeds from a post-translocation (POST) complex to a pre-translocation (PRE) complex, thus giving elongation factor G a second chance to translocate the tRNAs correctly. Binds to ribosomes in a GTP-dependent manner. This Chromohalobacter salexigens (strain ATCC BAA-138 / DSM 3043 / CIP 106854 / NCIMB 13768 / 1H11) protein is Elongation factor 4.